The chain runs to 285 residues: Bifunctional protein FolD (285 aa).

NADP(+)-binding positions include 164 to 166 (GRS), S189, and I230.

This sequence belongs to the tetrahydrofolate dehydrogenase/cyclohydrolase family. Homodimer.

The catalysed reaction is (6R)-5,10-methylene-5,6,7,8-tetrahydrofolate + NADP(+) = (6R)-5,10-methenyltetrahydrofolate + NADPH. It catalyses the reaction (6R)-5,10-methenyltetrahydrofolate + H2O = (6R)-10-formyltetrahydrofolate + H(+). It functions in the pathway one-carbon metabolism; tetrahydrofolate interconversion. In terms of biological role, catalyzes the oxidation of 5,10-methylenetetrahydrofolate to 5,10-methenyltetrahydrofolate and then the hydrolysis of 5,10-methenyltetrahydrofolate to 10-formyltetrahydrofolate. The chain is Bifunctional protein FolD from Oceanobacillus iheyensis (strain DSM 14371 / CIP 107618 / JCM 11309 / KCTC 3954 / HTE831).